Reading from the N-terminus, the 669-residue chain is DNA ligase (669 aa).

NAD(+) contacts are provided by residues 34-38 (DAEYD), 83-84 (SL), and Glu-114. Catalysis depends on Lys-116, which acts as the N6-AMP-lysine intermediate. NAD(+) is bound by residues Arg-137, Glu-171, Lys-287, and Lys-311. Positions 405, 408, 423, and 428 each coordinate Zn(2+). The region spanning 591–669 (NVESYFAGKT…EERFLQELNK (79 aa)) is the BRCT domain.

It belongs to the NAD-dependent DNA ligase family. LigA subfamily. The cofactor is Mg(2+). Mn(2+) serves as cofactor.

It carries out the reaction NAD(+) + (deoxyribonucleotide)n-3'-hydroxyl + 5'-phospho-(deoxyribonucleotide)m = (deoxyribonucleotide)n+m + AMP + beta-nicotinamide D-nucleotide.. In terms of biological role, DNA ligase that catalyzes the formation of phosphodiester linkages between 5'-phosphoryl and 3'-hydroxyl groups in double-stranded DNA using NAD as a coenzyme and as the energy source for the reaction. It is essential for DNA replication and repair of damaged DNA. The chain is DNA ligase from Bacillus cereus (strain AH820).